A 908-amino-acid chain; its full sequence is Probable RNA-directed DNA polymerase from transposon X-element (908 aa).

The 272-residue stretch at 481–752 folds into the Reverse transcriptase domain; sequence AIVRLQYFPY…NAAKYLGVLL (272 aa). The disordered stretch occupies residues 883–908; sequence RPPRRLNRRQPRDLITRSPLTRVRRS.

Requires Mg(2+) as cofactor. Mn(2+) serves as cofactor.

It carries out the reaction DNA(n) + a 2'-deoxyribonucleoside 5'-triphosphate = DNA(n+1) + diphosphate. The sequence is that of Probable RNA-directed DNA polymerase from transposon X-element (X-element\ORF2) from Drosophila melanogaster (Fruit fly).